A 307-amino-acid chain; its full sequence is Ribonuclease Z (307 aa).

Residues histidine 61, histidine 63, aspartate 65, histidine 66, histidine 138, aspartate 208, and histidine 264 each coordinate Zn(2+). Catalysis depends on aspartate 65, which acts as the Proton acceptor.

It belongs to the RNase Z family. Homodimer. Requires Zn(2+) as cofactor.

It catalyses the reaction Endonucleolytic cleavage of RNA, removing extra 3' nucleotides from tRNA precursor, generating 3' termini of tRNAs. A 3'-hydroxy group is left at the tRNA terminus and a 5'-phosphoryl group is left at the trailer molecule.. Its function is as follows. Zinc phosphodiesterase, which displays some tRNA 3'-processing endonuclease activity. Probably involved in tRNA maturation, by removing a 3'-trailer from precursor tRNA. The sequence is that of Ribonuclease Z from Pyrococcus horikoshii (strain ATCC 700860 / DSM 12428 / JCM 9974 / NBRC 100139 / OT-3).